Here is a 455-residue protein sequence, read N- to C-terminus: ATP-dependent protease ATPase subunit HslU (455 aa).

ATP-binding positions include V23, 65 to 70 (GVGKTE), D266, E333, and R405.

It belongs to the ClpX chaperone family. HslU subfamily. In terms of assembly, a double ring-shaped homohexamer of HslV is capped on each side by a ring-shaped HslU homohexamer. The assembly of the HslU/HslV complex is dependent on binding of ATP.

The protein localises to the cytoplasm. In terms of biological role, ATPase subunit of a proteasome-like degradation complex; this subunit has chaperone activity. The binding of ATP and its subsequent hydrolysis by HslU are essential for unfolding of protein substrates subsequently hydrolyzed by HslV. HslU recognizes the N-terminal part of its protein substrates and unfolds these before they are guided to HslV for hydrolysis. In Xanthomonas euvesicatoria pv. vesicatoria (strain 85-10) (Xanthomonas campestris pv. vesicatoria), this protein is ATP-dependent protease ATPase subunit HslU.